Here is a 314-residue protein sequence, read N- to C-terminus: 4-hydroxy-3-methylbut-2-enyl diphosphate reductase (314 aa).

Residue Cys-12 coordinates [4Fe-4S] cluster. 2 residues coordinate (2E)-4-hydroxy-3-methylbut-2-enyl diphosphate: His-41 and His-74. Dimethylallyl diphosphate contacts are provided by His-41 and His-74. Residues His-41 and His-74 each contribute to the isopentenyl diphosphate site. Cys-96 is a [4Fe-4S] cluster binding site. Residue His-124 coordinates (2E)-4-hydroxy-3-methylbut-2-enyl diphosphate. His-124 is a binding site for dimethylallyl diphosphate. Residue His-124 coordinates isopentenyl diphosphate. Catalysis depends on Glu-126, which acts as the Proton donor. A (2E)-4-hydroxy-3-methylbut-2-enyl diphosphate-binding site is contributed by Thr-167. Cys-197 provides a ligand contact to [4Fe-4S] cluster. Residues Ser-225, Ser-226, Asn-227, and Ser-269 each contribute to the (2E)-4-hydroxy-3-methylbut-2-enyl diphosphate site. Residues Ser-225, Ser-226, Asn-227, and Ser-269 each contribute to the dimethylallyl diphosphate site. Residues Ser-225, Ser-226, Asn-227, and Ser-269 each contribute to the isopentenyl diphosphate site.

It belongs to the IspH family. The cofactor is [4Fe-4S] cluster.

The catalysed reaction is isopentenyl diphosphate + 2 oxidized [2Fe-2S]-[ferredoxin] + H2O = (2E)-4-hydroxy-3-methylbut-2-enyl diphosphate + 2 reduced [2Fe-2S]-[ferredoxin] + 2 H(+). It carries out the reaction dimethylallyl diphosphate + 2 oxidized [2Fe-2S]-[ferredoxin] + H2O = (2E)-4-hydroxy-3-methylbut-2-enyl diphosphate + 2 reduced [2Fe-2S]-[ferredoxin] + 2 H(+). Its pathway is isoprenoid biosynthesis; dimethylallyl diphosphate biosynthesis; dimethylallyl diphosphate from (2E)-4-hydroxy-3-methylbutenyl diphosphate: step 1/1. It functions in the pathway isoprenoid biosynthesis; isopentenyl diphosphate biosynthesis via DXP pathway; isopentenyl diphosphate from 1-deoxy-D-xylulose 5-phosphate: step 6/6. Its function is as follows. Catalyzes the conversion of 1-hydroxy-2-methyl-2-(E)-butenyl 4-diphosphate (HMBPP) into a mixture of isopentenyl diphosphate (IPP) and dimethylallyl diphosphate (DMAPP). Acts in the terminal step of the DOXP/MEP pathway for isoprenoid precursor biosynthesis. In Actinobacillus pleuropneumoniae serotype 3 (strain JL03), this protein is 4-hydroxy-3-methylbut-2-enyl diphosphate reductase.